The chain runs to 149 residues: Oligosaccharyltransferase complex subunit ostc-A (149 aa).

Over 1 to 32 the chain is Cytoplasmic; sequence MESLYRVPFTVLECPNLKLKKPSWLHMPSAMT. A helical transmembrane segment spans residues 33 to 53; that stretch reads VYAMVVVSYFLITGGIIYDVI. Residues 54-83 lie on the Extracellular side of the membrane; it reads VEPPSVGSMTDEHGHQRPVAFLAYRVNGQY. Residues 84–104 form a helical membrane-spanning segment; the sequence is IMEGLASSFLFTMGGLGFIIL. Topologically, residues 105-117 are cytoplasmic; that stretch reads DRSNTPNIPKLNR. Residues 118-138 form a helical membrane-spanning segment; that stretch reads FLLLFIGFVCVLLSFFMARVF. At 139-149 the chain is on the extracellular side; the sequence is MRMKLPGYLMG.

Belongs to the OSTC family. In terms of assembly, specific component of the STT3A-containing form of the oligosaccharyltransferase (OST) complex.

Its subcellular location is the membrane. It functions in the pathway protein modification; protein glycosylation. Specific component of the STT3A-containing form of the oligosaccharyl transferase (OST) complex that catalyzes the initial transfer of a defined glycan (Glc(3)Man(9)GlcNAc(2) in eukaryotes) from the lipid carrier dolichol-pyrophosphate to an asparagine residue within an Asn-X-Ser/Thr consensus motif in nascent polypeptide chains, the first step in protein N-glycosylation. N-glycosylation occurs cotranslationally and the complex associates with the Sec61 complex at the channel-forming translocon complex that mediates protein translocation across the endoplasmic reticulum (ER). All subunits are required for a maximal enzyme activity. This Xenopus laevis (African clawed frog) protein is Oligosaccharyltransferase complex subunit ostc-A.